The chain runs to 409 residues: Elongation factor Tu (409 aa).

The region spanning 10 to 214 is the tr-type G domain; sequence KPHVNIGTIG…AVDSYIPDPE (205 aa). The segment at 19–26 is G1; it reads GHVDHGKT. A GTP-binding site is contributed by 19 to 26; it reads GHVDHGKT. Residue threonine 26 coordinates Mg(2+). A G2 region spans residues 60–64; that stretch reads GITIN. Residues 81-84 are G3; the sequence is DCPG. GTP-binding positions include 81 to 85 and 136 to 139; these read DCPGH and NKED. The G4 stretch occupies residues 136 to 139; that stretch reads NKED. The G5 stretch occupies residues 174–176; sequence SGL.

As to quaternary structure, monomer.

Its subcellular location is the cytoplasm. The catalysed reaction is GTP + H2O = GDP + phosphate + H(+). In terms of biological role, GTP hydrolase that promotes the GTP-dependent binding of aminoacyl-tRNA to the A-site of ribosomes during protein biosynthesis. The chain is Elongation factor Tu from Nostoc sp. (strain PCC 7120 / SAG 25.82 / UTEX 2576).